A 3291-amino-acid polypeptide reads, in one-letter code: Protocadherin-16 (3291 aa).

The first 35 residues, 1 to 35 (MQKELSVALSCPGMKSLRTLLPLLVLLGATVPGSW), serve as a signal peptide directing secretion. Topologically, residues 36–2933 (GQAGSLDLQI…PDLNLLLVGA (2898 aa)) are extracellular. Cadherin domains are found at residues 37–137 (QAGS…APAF), 138–249 (PQAR…APAF), 250–356 (NQSR…QPSM), 369–466 (VSEA…APAF), 476–572 (LPEV…EPQF), 573–679 (QRTF…PPQF), 680–784 (YPRE…PPIF), 785–888 (EQLQ…SPAF), 889–994 (PAPE…APRF), 995–1105 (DSPT…EPTF), 1100–1205 (SEEP…SPTF), 1218–1317 (IQVP…SPDL), 1326–1429 (VPVV…APTF), 1430–1539 (ARDP…APVF), 1539–1642 (FASP…APAF), 1643–1744 (PQQE…TPTF), 1745–1848 (GNTH…APVF), 1849–1953 (PVPS…APAF), 1976–2061 (LATL…GPRF), 2062–2164 (PRTS…APRF), 2165–2270 (LRPH…RPTI), 2270–2369 (IPQP…VPTF), 2370–2475 (SQSL…APSF), 2476–2595 (TLPH…PPVF), 2596–2699 (TRAS…GPAF), 2700–2806 (PLSL…DPVF), and 2807–2926 (LAPS…APDL). N396 is a glycosylation site (N-linked (GlcNAc...) asparagine). N2354 is a glycosylation site (N-linked (GlcNAc...) asparagine). Residues 2867-2886 (SRAPGSGTTTSGGGGRTRRE) are disordered. The chain crosses the membrane as a helical span at residues 2934–2954 (VAASLGVVVVLALAALVLGLV). Topologically, residues 2955-3291 (RARSRKAEAA…EPPDDTELRI (337 aa)) are cytoplasmic. A disordered region spans residues 2978 to 3033 (SLQKLGREPPSPPPSEHLYHQTLPSYGGPGAGGPYPRGGSLDPSHSSGRGSAEAAE). Gly residues predominate over residues 3004–3013 (GGPGAGGPYP). S3048 bears the Phosphoserine mark. 2 disordered regions span residues 3051–3081 (SSLA…APDT) and 3226–3291 (ASHR…ELRI). The segment covering 3237–3259 (SLSSAAMSPSFSPSLSPLAARSP) has biased composition (low complexity). The span at 3270–3279 (PSASALSTES) shows a compositional bias: polar residues.

In terms of assembly, heterophilic interaction with FAT4; this interaction affects their respective protein levels. As to expression, expressed in the epicardium and atrioventricular sulcus (at protein level).

The protein localises to the cell membrane. Its function is as follows. Calcium-dependent cell-adhesion protein. Mediates functions in neuroprogenitor cell proliferation and differentiation. In the heart, has a critical role for proper morphogenesis of the mitral valve, acting in the regulation of cell migration involved in valve formation. The polypeptide is Protocadherin-16 (Dchs1) (Mus musculus (Mouse)).